Here is a 275-residue protein sequence, read N- to C-terminus: 4-diphosphocytidyl-2-C-methyl-D-erythritol kinase (275 aa).

The active site involves Lys-14. ATP is bound at residue 98–108 (PMGAGLGGGSS). Residue Asp-140 is part of the active site.

The protein belongs to the GHMP kinase family. IspE subfamily.

It catalyses the reaction 4-CDP-2-C-methyl-D-erythritol + ATP = 4-CDP-2-C-methyl-D-erythritol 2-phosphate + ADP + H(+). It participates in isoprenoid biosynthesis; isopentenyl diphosphate biosynthesis via DXP pathway; isopentenyl diphosphate from 1-deoxy-D-xylulose 5-phosphate: step 3/6. Its function is as follows. Catalyzes the phosphorylation of the position 2 hydroxy group of 4-diphosphocytidyl-2C-methyl-D-erythritol. The polypeptide is 4-diphosphocytidyl-2-C-methyl-D-erythritol kinase (Francisella tularensis subsp. tularensis (strain WY96-3418)).